Reading from the N-terminus, the 490-residue chain is RNA-binding post-transcriptional regulator cip1 (490 aa).

Disordered regions lie at residues 16–63, 76–97, and 138–199; these read RGLA…GSSA, ASSRAASPAPSDSFPTFGYSQL, and HNVS…GEDT. The span at 34–62 shows a compositional bias: polar residues; it reads RLQSPLNSPKLQPIGSPQASRKTSGSGSS. Residues Ser-37, Ser-41, Ser-49, Ser-86, and Ser-141 each carry the phosphoserine modification. Low complexity-rich tracts occupy residues 76-88 and 141-160; these read ASSRAASPAPSDS and SPPSGAESSSESKSFSASGK. Positions 164 to 192 are enriched in polar residues; that stretch reads ADTSAEPSLDAFNSTQIKAGSTANSNSTP. An RRM domain is found at 202–280; that stretch reads TAIVVKNIPF…RRLRVEWKRQ (79 aa). Phosphoserine is present on residues Ser-397, Ser-401, and Ser-427. Thr-431 is subject to Phosphothreonine. Phosphoserine is present on residues Ser-435, Ser-456, and Ser-466. Residues 457-490 form a disordered region; it reads PLQKASTLSSPFNSKNDNDASTSASKQSFGVSHF.

As to quaternary structure, interacts with csx1. In terms of processing, phosphorylated by sty1.

The protein localises to the cytoplasm. Its function is as follows. Regulates global gene expression after oxidative stress. Interacts and stabilizes mRNAs and may regulate their transition between different cytoplasmic components after oxidative stress. This is RNA-binding post-transcriptional regulator cip1 (cip1) from Schizosaccharomyces pombe (strain 972 / ATCC 24843) (Fission yeast).